The sequence spans 103 residues: Cyclotide vitri-A (103 aa).

The first 9 residues, 1-9 (AAFALPAFA), serve as a signal peptide directing secretion. The propeptide occupies 10–69 (SFEKDVITPAALEAVLNRKAPLSNIMMENDAIVNVIANVKTVISNPVLEEALLKTNHGVN). A cross-link (cyclopeptide (Gly-Asn)) is located at residues 70 to 99 (GIPCGESCVWIPCITSAIGCSCKSKVCYRN). 3 cysteine pairs are disulfide-bonded: Cys-73–Cys-89, Cys-77–Cys-91, and Cys-82–Cys-96. Residues 100 to 103 (SLDN) constitute a propeptide that is removed on maturation.

Post-translationally, this is a cyclic peptide.

In terms of biological role, probably participates in a plant defense mechanism. The sequence is that of Cyclotide vitri-A from Viola biflora (Yellow wood violet).